Reading from the N-terminus, the 130-residue chain is Small ribosomal subunit protein uS9 (130 aa).

This sequence belongs to the universal ribosomal protein uS9 family.

The polypeptide is Small ribosomal subunit protein uS9 (Nitrosomonas eutropha (strain DSM 101675 / C91 / Nm57)).